A 184-amino-acid polypeptide reads, in one-letter code: Peptidyl-tRNA hydrolase (184 aa).

Tyr14 is a tRNA binding site. The active-site Proton acceptor is His19. The tRNA site is built by Phe60 and Asn62.

The protein belongs to the PTH family. In terms of assembly, monomer.

Its subcellular location is the cytoplasm. It catalyses the reaction an N-acyl-L-alpha-aminoacyl-tRNA + H2O = an N-acyl-L-amino acid + a tRNA + H(+). Its function is as follows. Hydrolyzes ribosome-free peptidyl-tRNAs (with 1 or more amino acids incorporated), which drop off the ribosome during protein synthesis, or as a result of ribosome stalling. In terms of biological role, catalyzes the release of premature peptidyl moieties from peptidyl-tRNA molecules trapped in stalled 50S ribosomal subunits, and thus maintains levels of free tRNAs and 50S ribosomes. The protein is Peptidyl-tRNA hydrolase of Mesomycoplasma hyopneumoniae (strain 232) (Mycoplasma hyopneumoniae).